Here is a 460-residue protein sequence, read N- to C-terminus: Nuclear transport factor 2 (460 aa).

One can recognise an NTF2 domain in the interval 15 to 131 (VGRAFVEQYY…YFVLNDVFRF (117 aa)). Disordered stretches follow at residues 207–226 (EPPT…GDAP), 238–289 (KSSP…VDVE), and 361–460 (RQAV…GGSS). The RRM domain maps to 293–370 (HSIYVRNLPF…RQAVVEEKKT (78 aa)). Positions 373-382 (RGGGNNGGSR) are enriched in gly residues. Over residues 383–394 (GRYFSGRGSFRN) the composition is skewed to low complexity. Composition is skewed to gly residues over residues 399–416 (GGRG…GGEF) and 450–460 (GRGGARGGGSS).

As to quaternary structure, interacts with MBD6.

It is found in the cytoplasm. It localises to the nucleus. Functionally, involved in RNA-directed DNA methylation (RdDM). The sequence is that of Nuclear transport factor 2 from Arabidopsis thaliana (Mouse-ear cress).